Reading from the N-terminus, the 158-residue chain is Transcription elongation factor GreB (158 aa).

Positions 53 to 75 (KRRLREIDRRVRFLTKRLEVLQI) form a coiled coil.

This sequence belongs to the GreA/GreB family. GreB subfamily.

Its function is as follows. Necessary for efficient RNA polymerase transcription elongation past template-encoded arresting sites. The arresting sites in DNA have the property of trapping a certain fraction of elongating RNA polymerases that pass through, resulting in locked ternary complexes. Cleavage of the nascent transcript by cleavage factors such as GreA or GreB allows the resumption of elongation from the new 3'terminus. GreB releases sequences of up to 9 nucleotides in length. The chain is Transcription elongation factor GreB from Pasteurella multocida (strain Pm70).